The primary structure comprises 341 residues: Ketol-acid reductoisomerase (NADP(+)) (341 aa).

One can recognise a KARI N-terminal Rossmann domain in the interval 2 to 182; it reads TDIVYDKDAD…GGLRAGGIRT (181 aa). NADP(+) contacts are provided by residues 25–28, Lys-48, Ser-51, Ser-53, and 83–86; these read YGSQ and DQHQ. His-108 is an active-site residue. Gly-134 is a binding site for NADP(+). The 146-residue stretch at 183 to 328 folds into the KARI C-terminal knotted domain; the sequence is TFTEETETDL…RELRKLFAWN (146 aa). Mg(2+)-binding residues include Asp-191, Glu-195, Glu-227, and Glu-231. Residue Ser-252 participates in substrate binding.

It belongs to the ketol-acid reductoisomerase family. Requires Mg(2+) as cofactor.

The catalysed reaction is (2R)-2,3-dihydroxy-3-methylbutanoate + NADP(+) = (2S)-2-acetolactate + NADPH + H(+). The enzyme catalyses (2R,3R)-2,3-dihydroxy-3-methylpentanoate + NADP(+) = (S)-2-ethyl-2-hydroxy-3-oxobutanoate + NADPH + H(+). The protein operates within amino-acid biosynthesis; L-isoleucine biosynthesis; L-isoleucine from 2-oxobutanoate: step 2/4. It participates in amino-acid biosynthesis; L-valine biosynthesis; L-valine from pyruvate: step 2/4. In terms of biological role, involved in the biosynthesis of branched-chain amino acids (BCAA). Catalyzes an alkyl-migration followed by a ketol-acid reduction of (S)-2-acetolactate (S2AL) to yield (R)-2,3-dihydroxy-isovalerate. In the isomerase reaction, S2AL is rearranged via a Mg-dependent methyl migration to produce 3-hydroxy-3-methyl-2-ketobutyrate (HMKB). In the reductase reaction, this 2-ketoacid undergoes a metal-dependent reduction by NADPH to yield (R)-2,3-dihydroxy-isovalerate. The chain is Ketol-acid reductoisomerase (NADP(+)) from Clavibacter sepedonicus (Clavibacter michiganensis subsp. sepedonicus).